Consider the following 467-residue polypeptide: Ribulose bisphosphate carboxylase large chain (467 aa).

N6,N6,N6-trimethyllysine is present on Lys-5. Residues Asn-114 and Thr-164 each contribute to the substrate site. The active-site Proton acceptor is the Lys-166. Lys-168 serves as a coordination point for substrate. Residues Lys-192, Asp-194, and Glu-195 each contribute to the Mg(2+) site. At Lys-192 the chain carries N6-carboxylysine. His-285 (proton acceptor) is an active-site residue. Arg-286, His-318, and Ser-370 together coordinate substrate.

This sequence belongs to the RuBisCO large chain family. Type I subfamily. Heterohexadecamer of 8 large chains and 8 small chains; disulfide-linked. The disulfide link is formed within the large subunit homodimers. Mg(2+) is required as a cofactor. In terms of processing, the disulfide bond which can form in the large chain dimeric partners within the hexadecamer appears to be associated with oxidative stress and protein turnover.

The protein localises to the plastid. Its subcellular location is the chloroplast. The catalysed reaction is 2 (2R)-3-phosphoglycerate + 2 H(+) = D-ribulose 1,5-bisphosphate + CO2 + H2O. The enzyme catalyses D-ribulose 1,5-bisphosphate + O2 = 2-phosphoglycolate + (2R)-3-phosphoglycerate + 2 H(+). Its function is as follows. RuBisCO catalyzes two reactions: the carboxylation of D-ribulose 1,5-bisphosphate, the primary event in carbon dioxide fixation, as well as the oxidative fragmentation of the pentose substrate in the photorespiration process. Both reactions occur simultaneously and in competition at the same active site. The chain is Ribulose bisphosphate carboxylase large chain from Tasmannia insipida (Pepperbush).